The chain runs to 411 residues: Putative competence-damage inducible protein (411 aa).

This sequence belongs to the CinA family.

The polypeptide is Putative competence-damage inducible protein (Caldicellulosiruptor saccharolyticus (strain ATCC 43494 / DSM 8903 / Tp8T 6331)).